A 449-amino-acid polypeptide reads, in one-letter code: Type 3 secretion system ATPase (449 aa).

An ATP-binding site is contributed by 178–183; that stretch reads GCGKTT.

The protein belongs to the ATPase alpha/beta chains family. T3SS ATPase subfamily. As to quaternary structure, the core secretion machinery of the T3SS is composed of approximately 20 different proteins, including cytoplasmic components, a base, an export apparatus and a needle. This subunit is part of the cytosolic complex. Forms homododecamers.

Its subcellular location is the cytoplasm. It catalyses the reaction ATP + H2O + cellular proteinSide 1 = ADP + phosphate + cellular proteinSide 2.. ATPase component of the type III secretion system (T3SS), also called injectisome, which is used to inject bacterial effector proteins into eukaryotic host cells. Acts as a molecular motor to provide the energy that is required for the export of proteins. Required for type III secretion apparatus (T3SA) formation, proper protein secretion, host cell invasion and virulence. May play a critical role in T3SS substrate recognition, disassembly of the effector/chaperone complex and unfolding of the effector in an ATP-dependent manner prior to secretion. The polypeptide is Type 3 secretion system ATPase (Pseudomonas syringae pv. syringae).